A 135-amino-acid polypeptide reads, in one-letter code: Small ribosomal subunit protein bS18 (135 aa).

Positions 1–65 are disordered; that stretch reads MARPDMGGPK…GDEGGGRRGF (65 aa). Residues 9 to 41 show a composition bias toward gly residues; it reads PKMGGGFGGPRSGGFGGGGGGGGFGGGGFGGGR. The span at 42–61 shows a compositional bias: basic and acidic residues; the sequence is GGDRGDRGDRDDRGGDEGGG.

The protein belongs to the bacterial ribosomal protein bS18 family. In terms of assembly, part of the 30S ribosomal subunit. Forms a tight heterodimer with protein bS6.

Its function is as follows. Binds as a heterodimer with protein bS6 to the central domain of the 16S rRNA, where it helps stabilize the platform of the 30S subunit. In Anaeromyxobacter dehalogenans (strain 2CP-C), this protein is Small ribosomal subunit protein bS18.